The following is a 357-amino-acid chain: Hydroxyproline O-arabinosyltransferase RDN1 (357 aa).

A helical; Signal-anchor transmembrane segment spans residues 13–33 (LLMLLMVLGFSFATYNLVFMM).

Expressed in the vasculature of leaves, petioles, stems and roots. Expressed in the vascular cylinder throughout the root, and nodule vasculature.

The protein localises to the golgi apparatus membrane. The catalysed reaction is trans-4-hydroxy-L-prolyl-[protein] + UDP-beta-L-arabinofuranose = O-(beta-L-arabinofuranosyl)-trans-4-hydroxy-L-prolyl-[protein] + UDP + H(+). Probable glycosyltransferase involved in the O-arabinosylation of several proteins including extensins and small signaling peptides. Catalyzes the transfer of the initial L-arabinose to the hydroxyl group of Hyp residues. Probably involved in the arabinosylation of CLE12, a signaling peptide that moves from root to shoot, to interact with SUNN receptor kinase signaling that regulates nodulation. Involved in long distance nodulation signaling events. Involved in the autoregulation of nodulation (AON), a long distance systemic signaling from root to shoot and back again, which allows legumes to limit the number of root nodules formed based on available nitrogen and previous rhizobial colonization. Functions in the root, upstream of the shoot receptor kinase SUNN and via CLE peptide, to control AON. This is Hydroxyproline O-arabinosyltransferase RDN1 from Medicago truncatula (Barrel medic).